The chain runs to 123 residues: Small ribosomal subunit protein uS13 (123 aa).

The interval 97 to 123 (PVRGQRTKTNARTRKGPRKTVGVRRKK) is disordered.

This sequence belongs to the universal ribosomal protein uS13 family. Part of the 30S ribosomal subunit. Forms a loose heterodimer with protein S19. Forms two bridges to the 50S subunit in the 70S ribosome.

In terms of biological role, located at the top of the head of the 30S subunit, it contacts several helices of the 16S rRNA. In the 70S ribosome it contacts the 23S rRNA (bridge B1a) and protein L5 of the 50S subunit (bridge B1b), connecting the 2 subunits; these bridges are implicated in subunit movement. Contacts the tRNAs in the A and P-sites. The sequence is that of Small ribosomal subunit protein uS13 from Pelotomaculum thermopropionicum (strain DSM 13744 / JCM 10971 / SI).